A 197-amino-acid chain; its full sequence is Glycerol-3-phosphate acyltransferase (197 aa).

The next 6 helical transmembrane spans lie at 1 to 21, 50 to 70, 77 to 97, 111 to 131, 137 to 157, and 158 to 178; these read MNILIIFASYLLGSLPTGFLI, WPALFVFIIDLGKGLIAVKIA, GLIEVIAGISAISGHIWPIWL, MFLALSWKVGLASLGFFLIVL, VSLSSISAAILLPIFMFFYLG, and KFMHSYFFISLIVALLVIWKH.

The protein belongs to the PlsY family. In terms of assembly, probably interacts with PlsX.

Its subcellular location is the cell inner membrane. It catalyses the reaction an acyl phosphate + sn-glycerol 3-phosphate = a 1-acyl-sn-glycero-3-phosphate + phosphate. Its pathway is lipid metabolism; phospholipid metabolism. Functionally, catalyzes the transfer of an acyl group from acyl-phosphate (acyl-PO(4)) to glycerol-3-phosphate (G3P) to form lysophosphatidic acid (LPA). This enzyme utilizes acyl-phosphate as fatty acyl donor, but not acyl-CoA or acyl-ACP. The chain is Glycerol-3-phosphate acyltransferase from Prochlorococcus marinus (strain MIT 9301).